The primary structure comprises 217 residues: MNLAAIAENYSMHNGESGAIVPYVPPPYNFASAPTFSQRTSQMESVSLGILNQAMSSTTGASGALKDEKAAFGAMAEALRDPEPIRQIKKQVGIRTLKNLKMELATMRRKKSALKIMIFISGCVTLATSMVGGLSIVDDQILDDYKKNDWLMKTIHGLNLLCTTVLLAAGKISDKIQEEISRTKRDIAKRESYVSAASMSWNGDTEMLLQGTKYGES.

Belongs to the orbivirus NS3 family.

In terms of biological role, may play a role in the release of virions from infected cells. This chain is Non-structural protein NS3 (Segment-10), found in African horse sickness virus 9 (AHSV-9).